Here is a 396-residue protein sequence, read N- to C-terminus: Acetate kinase (396 aa).

Asparagine 8 is a binding site for Mg(2+). Residue lysine 15 coordinates ATP. Position 89 (arginine 89) interacts with substrate. Aspartate 146 (proton donor/acceptor) is an active-site residue. ATP contacts are provided by residues 206 to 210, 283 to 285, and 331 to 335; these read HIGNG, DMR, and GIGEN. Residue glutamate 383 participates in Mg(2+) binding.

The protein belongs to the acetokinase family. Homodimer. It depends on Mg(2+) as a cofactor. The cofactor is Mn(2+).

The protein resides in the cytoplasm. It carries out the reaction acetate + ATP = acetyl phosphate + ADP. It functions in the pathway metabolic intermediate biosynthesis; acetyl-CoA biosynthesis; acetyl-CoA from acetate: step 1/2. Functionally, catalyzes the formation of acetyl phosphate from acetate and ATP. Can also catalyze the reverse reaction. The chain is Acetate kinase from Streptococcus gordonii (strain Challis / ATCC 35105 / BCRC 15272 / CH1 / DL1 / V288).